Consider the following 158-residue polypeptide: MQCPSCQNTDSRVLESRAADGGRSVRRRRECLNCDFRFTTYERVETVPITVIKRDGCRELFNRTKVLHGLSRACDKTGLDAARLETVVENLELQLQQRTAKEVASSEIGELVLKELKQISEVAYIRFASVYRQFRGIDDFVSTLETMNTEQEHLAAVR.

A zinc finger spans residues 3 to 34; the sequence is CPSCQNTDSRVLESRAADGGRSVRRRRECLNC. An ATP-cone domain is found at 49-139; it reads ITVIKRDGCR…VYRQFRGIDD (91 aa).

Belongs to the NrdR family. Zn(2+) is required as a cofactor.

Its function is as follows. Negatively regulates transcription of bacterial ribonucleotide reductase nrd genes and operons by binding to NrdR-boxes. The sequence is that of Transcriptional repressor NrdR from Synechococcus sp. (strain CC9902).